Here is a 579-residue protein sequence, read N- to C-terminus: Fatty-acid amide hydrolase 1 (579 aa).

A helical transmembrane segment spans residues 9–29 (ALSGLSGVCLACSLLSAAVVL). Topologically, residues 30–403 (RWTRSQTARG…GDFVDPCLGD (374 aa)) are cytoplasmic. The Charge relay system role is filled by Lys142. Substrate-binding positions include Met191, Ser217, and 238–241 (IGGS). The active-site Charge relay system is the Ser217. Ser241 acts as the Acyl-ester intermediate in catalysis. Ser241 bears the Phosphoserine mark. Residues 404 to 433 (LVLVLKLPRWFKKLLSFLLKPLFPRLAAFL) lie within the membrane without spanning it. Residues 434 to 579 (NSMCPRSAEK…RLMTPEKRPS (146 aa)) lie on the Cytoplasmic side of the membrane.

Belongs to the amidase family. Homodimer.

The protein localises to the endoplasmic reticulum membrane. Its subcellular location is the golgi apparatus membrane. The catalysed reaction is N-(5Z,8Z,11Z,14Z-eicosatetraenoyl)-ethanolamine + H2O = ethanolamine + (5Z,8Z,11Z,14Z)-eicosatetraenoate. It carries out the reaction (9Z)-octadecenamide + H2O = (9Z)-octadecenoate + NH4(+). It catalyses the reaction 2-(5Z,8Z,11Z,14Z-eicosatetraenoyl)-glycerol + H2O = glycerol + (5Z,8Z,11Z,14Z)-eicosatetraenoate + H(+). The enzyme catalyses N-(9Z-hexadecenoyl) ethanolamine + H2O = (9Z)-hexadecenoate + ethanolamine. The catalysed reaction is N-(9Z-octadecenoyl) ethanolamine + H2O = ethanolamine + (9Z)-octadecenoate. It carries out the reaction N-octadecanoyl ethanolamine + H2O = octadecanoate + ethanolamine. It catalyses the reaction N-docosanoyl-ethanolamine + H2O = docosanoate + ethanolamine. The enzyme catalyses N-tetracosanoyl-taurine + H2O = tetracosanoate + taurine. The catalysed reaction is N-(15Z-tetracosenoyl)-ethanolamine + H2O = (15Z)-tetracosenoate + ethanolamine. It carries out the reaction N-(9Z-octadecenoyl)-taurine + H2O = taurine + (9Z)-octadecenoate. It catalyses the reaction N-docosanoyl-taurine + H2O = docosanoate + taurine. The enzyme catalyses N-(15Z-tetracosenoyl)-taurine + H2O = (15Z)-tetracosenoate + taurine. The catalysed reaction is N-tricosanoyl-taurine + H2O = tricosanoate + taurine. It carries out the reaction (9Z,12Z,15Z)-octadecatrienamide + H2O = (9Z,12Z,15Z)-octadecatrienoate + NH4(+). It catalyses the reaction (5Z,8Z,11Z,14Z)-eicosatetraenamide + H2O = (5Z,8Z,11Z,14Z)-eicosatetraenoate + NH4(+). The enzyme catalyses (6Z)-octadecenamide + H2O = (6Z)-octadecenoate + NH4(+). The catalysed reaction is (15Z)-tetracosenamide + H2O = (15Z)-tetracosenoate + NH4(+). It carries out the reaction (8Z,11Z,14Z)-eicosatrienamide + H2O = (8Z,11Z,14Z)-eicosatrienoate + NH4(+). It catalyses the reaction (11Z,14Z,17Z)-eicosatrienamide + H2O = (11Z,14Z,17Z)-eicosatrienoate + NH4(+). The enzyme catalyses (11Z,14Z)-eicosadienamide + H2O = (11Z,14Z)-eicosadienoate + NH4(+). The catalysed reaction is (9Z,12Z)-octadecadienamide + H2O = (9Z,12Z)-octadecadienoate + NH4(+). It carries out the reaction tetradecamide + H2O = tetradecanoate + NH4(+). It catalyses the reaction 1-O-methyl-(5Z,8Z,11Z,14Z)-eicosatetraenoate + H2O = methanol + (5Z,8Z,11Z,14Z)-eicosatetraenoate + H(+). The enzyme catalyses (11Z)-eicosenamide + H2O = (11Z)-eicosenoate + NH4(+). The catalysed reaction is (9Z)-octadecenoate + glycine = N-(9Z-octadecenoyl)glycine + H2O. It carries out the reaction N-(5Z,8Z,11Z,14Z)-eicosatetraenoyl-glycine + H2O = (5Z,8Z,11Z,14Z)-eicosatetraenoate + glycine. It catalyses the reaction N-(5Z,8Z,11Z,14Z-eicosatetraenoyl)-L-serine + H2O = (5Z,8Z,11Z,14Z)-eicosatetraenoate + L-serine. With respect to regulation, inhibited the trifluoromethyl compound PF-3845. In terms of biological role, catalyzes the hydrolysis of endogenous amidated lipids like the endocannabinoid anandamide (N-(5Z,8Z,11Z,14Z-eicosatetraenoyl)-ethanolamine), as well as other fatty amides such as the taurine-conjugated fatty acids (a structural class of central nervous system (CNS) metabolites), to their corresponding fatty acids, thereby regulating the signaling functions of these molecules. FAAH cooperates with PM20D1 in the hydrolysis of amino acid-conjugated fatty acids such as N-fatty acyl glycine and N-fatty acyl-L-serine, thereby acting as a physiological regulator of specific subsets of intracellular, but not of extracellular, N-fatty acyl amino acids. It can also catalyze the hydrolysis of the endocannabinoid 2-arachidonoylglycerol (2-(5Z,8Z,11Z,14Z-eicosatetraenoyl)-glycerol). The polypeptide is Fatty-acid amide hydrolase 1 (Faah) (Mus musculus (Mouse)).